A 310-amino-acid polypeptide reads, in one-letter code: MIQIARTWRVFAGGMATGFIGVVLVTAGKASADPLLPPPPIPAPVSAPATVPPVQNLTALPGGSSNRFSPAPAPAPIASPIPVGAPGSTAVPPLPPPVTPAISGTLRDHLREKGVKLEAQRPHGFKALDITLPMPPRWTQVPDPNVPDAFVVIADRLGNSVYTSNAQLVVYRLIGDFDPAEAITHGYIDSQKLLAWQTTNASMANFDGFPSSIIEGTYRENDMTLNTSRRHVIATSGADKYLVSLSVTTALSQAVTDGPATDAIVNGFQVVAHAAPAQAPAPAPGSAPVGLPGQAPGYPPAGTLTPVPPR.

A signal peptide spans methionine 1–alanine 32. The disordered stretch occupies residues glutamine 278–arginine 310.

The protein to M.leprae ML0031.

The sequence is that of Proline-rich 28 kDa antigen (mtc28) from Mycobacterium bovis (strain ATCC BAA-935 / AF2122/97).